The primary structure comprises 568 residues: Proline--tRNA ligase (568 aa).

This sequence belongs to the class-II aminoacyl-tRNA synthetase family. ProS type 1 subfamily. As to quaternary structure, homodimer.

The protein resides in the cytoplasm. It carries out the reaction tRNA(Pro) + L-proline + ATP = L-prolyl-tRNA(Pro) + AMP + diphosphate. In terms of biological role, catalyzes the attachment of proline to tRNA(Pro) in a two-step reaction: proline is first activated by ATP to form Pro-AMP and then transferred to the acceptor end of tRNA(Pro). As ProRS can inadvertently accommodate and process non-cognate amino acids such as alanine and cysteine, to avoid such errors it has two additional distinct editing activities against alanine. One activity is designated as 'pretransfer' editing and involves the tRNA(Pro)-independent hydrolysis of activated Ala-AMP. The other activity is designated 'posttransfer' editing and involves deacylation of mischarged Ala-tRNA(Pro). The misacylated Cys-tRNA(Pro) is not edited by ProRS. This is Proline--tRNA ligase from Listeria welshimeri serovar 6b (strain ATCC 35897 / DSM 20650 / CCUG 15529 / CIP 8149 / NCTC 11857 / SLCC 5334 / V8).